A 197-amino-acid polypeptide reads, in one-letter code: Heart- and neural crest derivatives-expressed protein 1 (197 aa).

Disordered stretches follow at residues V61 to E94 and V155 to T184. Positions L78–R90 are enriched in basic residues. The 53-residue stretch at R80–L132 folds into the bHLH domain.

In terms of assembly, efficient DNA binding requires dimerization with another bHLH protein. As to expression, highly expressed in the adult heart and expressed at lower levels in the intestine and gall bladder.

Its subcellular location is the nucleus. The protein resides in the nucleolus. In terms of biological role, plays an essential role in cardiac morphogenesis. This Xenopus laevis (African clawed frog) protein is Heart- and neural crest derivatives-expressed protein 1 (hand1).